We begin with the raw amino-acid sequence, 1219 residues long: Protein jagged-1 (1219 aa).

A signal peptide spans 1-33; sequence MRSPRTRGRPGRPLSLLLALLCALRAKVCGASG. The Extracellular segment spans residues 34-1067; it reads QFELEILSMQ…QRRPLKNRTD (1034 aa). The N-linked (GlcNAc...) asparagine glycan is linked to Asn143. The 45-residue stretch at 185–229 folds into the DSL domain; the sequence is VTCDDHYYGFGCNKFCRPRDDFFGHYACDQNGNKTCMEGWMGPEC. 2 disulfide bridges follow: Cys187/Cys196 and Cys200/Cys212. The tract at residues 199–207 is important for interaction with NOTCH1; sequence FCRPRDDFF. A glycan (N-linked (GlcNAc...) asparagine) is linked at Asn217. 40 disulfides stabilise this stretch: Cys220/Cys229, Cys234/Cys245, Cys238/Cys251, Cys253/Cys262, Cys265/Cys276, Cys271/Cys282, Cys284/Cys293, Cys300/Cys312, Cys306/Cys322, Cys324/Cys333, Cys340/Cys351, Cys345/Cys360, Cys362/Cys371, Cys378/Cys389, Cys383/Cys398, Cys400/Cys409, Cys416/Cys427, Cys421/Cys436, Cys438/Cys447, Cys454/Cys464, Cys458/Cys473, Cys475/Cys484, Cys491/Cys502, Cys496/Cys511, Cys513/Cys522, Cys529/Cys540, Cys534/Cys549, Cys551/Cys560, Cys578/Cys605, Cys599/Cys615, Cys617/Cys626, Cys633/Cys644, Cys638/Cys653, Cys655/Cys664, Cys671/Cys682, Cys676/Cys691, Cys693/Cys702, Cys709/Cys720, Cys714/Cys729, and Cys731/Cys740. The 34-residue stretch at 230 to 263 folds into the EGF-like 1 domain; it reads NKAICRQGCSPKHGSCKLPGDCRCQYGWQGLYCD. The EGF-like 2; atypical domain occupies 264–294; it reads KCIPHPGCVHGTCNEPWQCLCETNWGGQLCD. EGF-like domains follow at residues 296 to 334 and 336 to 372; these read DLNY…PNCE and AEHA…PTCS. The EGF-like 5; calcium-binding domain occupies 374–410; the sequence is NIDDCSPNNCSHGGTCQDLVNGFKCVCPPQWTGKTCQ. N-linked (GlcNAc...) asparagine glycosylation is present at Asn382. An EGF-like 6; calcium-binding domain is found at 412–448; that stretch reads DANECEAKPCVNARSCKNLIASYYCDCLPGWMGQNCD. The region spanning 450–485 is the EGF-like 7; calcium-binding domain; the sequence is NINDCLGQCQNDASCRDLVNGYRCICPPGYAGDHCE. Residues 487-523 form the EGF-like 8; calcium-binding domain; sequence DIDECASNPCLNGGHCQNEINRFQCLCPTGFSGNLCQ. 2 EGF-like domains span residues 525–561 and 586–627; these read DIDY…KNCS and DTPE…TYCH. N-linked (GlcNAc...) asparagine glycosylation is present at Asn559. In terms of domain architecture, EGF-like 11; calcium-binding spans 629-665; the sequence is NINDCEGNPCTNGGTCIDGVNSYKCICSDGWEGAHCE. The region spanning 667–703 is the EGF-like 12; calcium-binding domain; the sequence is NINDCSQNPCHYGGTCRDLVNDFYCDCKNGWKGKTCH. 2 EGF-like domains span residues 705 to 741 and 744 to 780; these read RDSQ…TTCN and RNSS…PICT. Residue Asn745 is glycosylated (N-linked (GlcNAc...) asparagine). 11 disulfides stabilise this stretch: Cys748/Cys759, Cys753/Cys768, Cys770/Cys779, Cys786/Cys797, Cys791/Cys806, Cys808/Cys817, Cys824/Cys835, Cys829/Cys844, Cys846/Cys855, Cys925/Cys936, and Cys948/Cys958. Positions 782-818 constitute an EGF-like 15; calcium-binding domain; the sequence is NTNDCSPHPCYNSGTCVDGDNWYRCECAPGFAGPDCR. Residues 820–856 enclose the EGF-like 16; calcium-binding domain; that stretch reads NINECQSSPCAFGATCVDEINGYQCICPPGHSGAKCH. Asn960, Asn991, Asn1045, and Asn1064 each carry an N-linked (GlcNAc...) asparagine glycan. A helical membrane pass occupies residues 1068-1093; that stretch reads FLVPLLSSVLTVAWVCCLVTAFYWCV. At 1094–1219 the chain is on the cytoplasmic side; the sequence is RKRRRKPSSH…QSLNRMEYIV (126 aa). The interval 1182 to 1219 is disordered; sequence REEKVPQRTPTKHPNWTNKQDNRDLESAQSLNRMEYIV. Polar residues predominate over residues 1189–1200; it reads RTPTKHPNWTNK.

Interacts with NOTCH1. Interacts with NOTCH2 and NOTCH3. In terms of tissue distribution, widely expressed in a variety of tissues.

The protein resides in the membrane. It localises to the cell membrane. Its function is as follows. Ligand for multiple Notch receptors and involved in the mediation of Notch signaling. May be involved in cell-fate decisions during hematopoiesis. Enhances fibroblast growth factor-induced angiogenesis (in vitro). Seems to be involved in early and late stages of mammalian cardiovascular development. Inhibits myoblast differentiation. May regulate fibroblast growth factor-induced angiogenesis. This is Protein jagged-1 (Jag1) from Rattus norvegicus (Rat).